An 83-amino-acid polypeptide reads, in one-letter code: Three-finger toxin MALT0052C (83 aa).

The signal sequence occupies residues 1–21 (MKTLLLTLVVVTIVCLDFGHT). Cystine bridges form between C24–C45, C38–C62, C64–C75, and C76–C81.

It belongs to the three-finger toxin family. Short-chain subfamily. Type I alpha-neurotoxin sub-subfamily. In terms of tissue distribution, expressed by the venom gland.

Its subcellular location is the secreted. Functionally, binds to muscle nicotinic acetylcholine receptor (nAChR) and inhibit acetylcholine from binding to the receptor, thereby impairing neuromuscular transmission. This is Three-finger toxin MALT0052C from Micrurus altirostris (Uruguayan coral snake).